The chain runs to 280 residues: Pantothenate synthetase (280 aa).

Met30 to His37 provides a ligand contact to ATP. His37 serves as the catalytic Proton donor. Gln61 contacts (R)-pantoate. Gln61 contacts beta-alanine. Gly147–Asp150 provides a ligand contact to ATP. Position 153 (Gln153) interacts with (R)-pantoate. ATP contacts are provided by residues Val176 and Met184–Arg187.

It belongs to the pantothenate synthetase family. Homodimer.

The protein resides in the cytoplasm. The enzyme catalyses (R)-pantoate + beta-alanine + ATP = (R)-pantothenate + AMP + diphosphate + H(+). It functions in the pathway cofactor biosynthesis; (R)-pantothenate biosynthesis; (R)-pantothenate from (R)-pantoate and beta-alanine: step 1/1. Its function is as follows. Catalyzes the condensation of pantoate with beta-alanine in an ATP-dependent reaction via a pantoyl-adenylate intermediate. The protein is Pantothenate synthetase of Fervidobacterium nodosum (strain ATCC 35602 / DSM 5306 / Rt17-B1).